The primary structure comprises 276 residues: Exosome complex component RRP43 (276 aa).

Alanine 2 bears the N-acetylalanine mark.

The protein belongs to the RNase PH family. In terms of assembly, component of the RNA exosome core complex (Exo-9), composed of EXOSC1, EXOSC2, EXOSC3, EXOSC4, EXOSC5, EXOSC6, EXOSC7, EXOSC8 and EXOSC9; within the complex interacts with EXOSC5 and EXOSC6. The catalytically inactive RNA exosome core complex (Exo-9) associates with the catalytic subunit EXOSC10/RRP6. Exo-9 may associate with DIS3 to form the nucleolar exosome complex, or DIS3L to form the cytoplasmic exosome complex. Exo-9 is formed by a hexameric base ring consisting of the heterodimers EXOSC4-EXOSC9, EXOSC5-EXOSC8 and EXOSC6-EXOSC7, and a cap ring consisting of EXOSC1, EXOSC2 and EXOSC3. The RNA exosome complex associates with cofactors C1D/RRP47, MPHOSPH6/MPP6 and MTREX/MTR4. Binds outer membrane protein opap from Neisseria gonorrhoeae.

The protein localises to the cytoplasm. The protein resides in the nucleus. It localises to the nucleolus. Its function is as follows. Non-catalytic component of the RNA exosome complex which has 3'-&gt;5' exoribonuclease activity and participates in a multitude of cellular RNA processing and degradation events. In the nucleus, the RNA exosome complex is involved in proper maturation of stable RNA species such as rRNA, snRNA and snoRNA, in the elimination of RNA processing by-products and non-coding 'pervasive' transcripts, such as antisense RNA species and promoter-upstream transcripts (PROMPTs), and of mRNAs with processing defects, thereby limiting or excluding their export to the cytoplasm. The RNA exosome may be involved in Ig class switch recombination (CSR) and/or Ig variable region somatic hypermutation (SHM) by targeting AICDA deamination activity to transcribed dsDNA substrates. In the cytoplasm, the RNA exosome complex is involved in general mRNA turnover and specifically degrades inherently unstable mRNAs containing AU-rich elements (AREs) within their 3' untranslated regions, and in RNA surveillance pathways, preventing translation of aberrant mRNAs. It seems to be involved in degradation of histone mRNA. The catalytic inactive RNA exosome core complex of 9 subunits (Exo-9) is proposed to play a pivotal role in the binding and presentation of RNA for ribonucleolysis, and to serve as a scaffold for the association with catalytic subunits and accessory proteins or complexes. EXOSC8 binds to ARE-containing RNAs. This chain is Exosome complex component RRP43 (EXOSC8), found in Homo sapiens (Human).